The primary structure comprises 453 residues: Dibenzothiophene-sulfone monooxygenase (453 aa).

FMN contacts are provided by Asp-59, Thr-106, His-156, Tyr-160, and Ser-231.

Belongs to the NtaA/SnaA/DszA monooxygenase family. As to quaternary structure, homodimer.

Its subcellular location is the cytoplasm. It carries out the reaction dibenzothiophene 5,5-dioxide + FMNH2 + NADH + O2 = 2'-hydroxybiphenyl-2-sulfinate + FMN + NAD(+) + H2O + H(+). The protein operates within sulfur metabolism; dibenzothiophene degradation. Catalyzes the second step of the '4S' desulfurization pathway that removes covalently bound sulfur from dibenzothiophene (DBT) without breaking carbon-carbon bonds. Metabolizes DBT-sulfone (DBTO2 or DBT 5,5-dioxide) to 2-(2'-hydroxyphenyl)benzene sulphinate (HBPS). The sequence is that of Dibenzothiophene-sulfone monooxygenase from Rhodococcus erythropolis (strain XP).